A 419-amino-acid chain; its full sequence is MQKTMTRHLSRNRKPHEKVSHVPRRGPRTYQDPCDPGWYVVNSRRGVAPQPTPTSGSLGRKPYNPGCPSRKWTKKIIAAPKHGFYSAKDHGYWVPKVQAQKKYNPPRKVVGGGRSYKDVLSTPAKIQIKPTPESILLAQKIQNSTFKSRGKVTLSQEKIPLINRFQELLIEKELMEDVEESQPFVANDSRAQHLFCKKVLRKVGRREILVCPITNEESHVNLKTGIKARIVDSMGSVVHEENIPAYNRGHVVKSMRKRIVHERESKPIPVIGSFSDRAIRVLCDDHTDELASASSVPSEWKPSKNQRAVPCLLQNESATVVSAKPDWYAPVKVCTHKQYMKVQRVFLDAMFIMRALRFHIDAKILRETWVKCWLQVHRKNVAFPGWMIAPLLSGTVPCEQEFLLPRVNETRAFATVCYA.

Basic residues predominate over residues 1–27; the sequence is MQKTMTRHLSRNRKPHEKVSHVPRRGP. The interval 1–66 is disordered; that stretch reads MQKTMTRHLS…SLGRKPYNPG (66 aa).

It belongs to the nepovirus satellite RNA 48 kDa protein family.

The chain is Satellite RNA 48 kDa protein from Allium porrum (Leek).